The primary structure comprises 65 residues: Large ribosomal subunit protein bL35 (65 aa).

Residues 1-22 (MPKIKTLRSAAKRFKKTASGKF) form a disordered region. Residues 10–22 (AAKRFKKTASGKF) show a composition bias toward basic residues.

Belongs to the bacterial ribosomal protein bL35 family.

The chain is Large ribosomal subunit protein bL35 from Buchnera aphidicola subsp. Schizaphis graminum (strain Sg).